The chain runs to 336 residues: Biotin synthase (336 aa).

The region spanning 55-282 (NRVQLSKLLN…QSHVRLTAGR (228 aa)) is the Radical SAM core domain. Residues Cys70, Cys74, and Cys77 each contribute to the [4Fe-4S] cluster site. [2Fe-2S] cluster is bound by residues Cys114, Cys145, Cys205, and Arg277.

Belongs to the radical SAM superfamily. Biotin synthase family. In terms of assembly, homodimer. Requires [4Fe-4S] cluster as cofactor. [2Fe-2S] cluster is required as a cofactor.

The enzyme catalyses (4R,5S)-dethiobiotin + (sulfur carrier)-SH + 2 reduced [2Fe-2S]-[ferredoxin] + 2 S-adenosyl-L-methionine = (sulfur carrier)-H + biotin + 2 5'-deoxyadenosine + 2 L-methionine + 2 oxidized [2Fe-2S]-[ferredoxin]. The protein operates within cofactor biosynthesis; biotin biosynthesis; biotin from 7,8-diaminononanoate: step 2/2. Functionally, catalyzes the conversion of dethiobiotin (DTB) to biotin by the insertion of a sulfur atom into dethiobiotin via a radical-based mechanism. The protein is Biotin synthase of Brucella anthropi (strain ATCC 49188 / DSM 6882 / CCUG 24695 / JCM 21032 / LMG 3331 / NBRC 15819 / NCTC 12168 / Alc 37) (Ochrobactrum anthropi).